The chain runs to 254 residues: Imidazole glycerol phosphate synthase subunit HisF (254 aa).

Residues D13 and D132 contribute to the active site.

Belongs to the HisA/HisF family. Heterodimer of HisH and HisF.

It localises to the cytoplasm. The catalysed reaction is 5-[(5-phospho-1-deoxy-D-ribulos-1-ylimino)methylamino]-1-(5-phospho-beta-D-ribosyl)imidazole-4-carboxamide + L-glutamine = D-erythro-1-(imidazol-4-yl)glycerol 3-phosphate + 5-amino-1-(5-phospho-beta-D-ribosyl)imidazole-4-carboxamide + L-glutamate + H(+). It participates in amino-acid biosynthesis; L-histidine biosynthesis; L-histidine from 5-phospho-alpha-D-ribose 1-diphosphate: step 5/9. IGPS catalyzes the conversion of PRFAR and glutamine to IGP, AICAR and glutamate. The HisF subunit catalyzes the cyclization activity that produces IGP and AICAR from PRFAR using the ammonia provided by the HisH subunit. This chain is Imidazole glycerol phosphate synthase subunit HisF, found in Wolinella succinogenes (strain ATCC 29543 / DSM 1740 / CCUG 13145 / JCM 31913 / LMG 7466 / NCTC 11488 / FDC 602W) (Vibrio succinogenes).